A 1343-amino-acid chain; its full sequence is DNA-directed RNA polymerase subunit beta (1343 aa).

The protein belongs to the RNA polymerase beta chain family. In terms of assembly, the RNAP catalytic core consists of 2 alpha, 1 beta, 1 beta' and 1 omega subunit. When a sigma factor is associated with the core the holoenzyme is formed, which can initiate transcription.

It catalyses the reaction RNA(n) + a ribonucleoside 5'-triphosphate = RNA(n+1) + diphosphate. DNA-dependent RNA polymerase catalyzes the transcription of DNA into RNA using the four ribonucleoside triphosphates as substrates. This is DNA-directed RNA polymerase subunit beta from Haemophilus influenzae (strain PittEE).